A 187-amino-acid polypeptide reads, in one-letter code: MDLLNTTFLSIGLAIDAFAVSLSSGFIIKHIKFNKALKIALFFGIFQGVMPLIGWLTGLTFRDALANFDHWIAFILLAAIGGKMIYEACQDEEENKKFNPLDNYTLFALAIATSIDALAAGLGLSVLRVSILLACTLIASITFSLSFIGVFIGHKFGSIFNQKLEILGGITLIGIGTKILVEGLIIH.

6 helical membrane-spanning segments follow: residues 8–28 (FLSIGLAIDAFAVSLSSGFII), 39–59 (IALFFGIFQGVMPLIGWLTGL), 65–85 (LANFDHWIAFILLAAIGGKMI), 106–126 (LFALAIATSIDALAAGLGLSV), 131–151 (ILLACTLIASITFSLSFIGVF), and 166–186 (ILGGITLIGIGTKILVEGLII).

Belongs to the MntP (TC 9.B.29) family.

Its subcellular location is the cell inner membrane. Its function is as follows. Probably functions as a manganese efflux pump. This Rippkaea orientalis (strain PCC 8801 / RF-1) (Cyanothece sp. (strain PCC 8801)) protein is Putative manganese efflux pump MntP.